The sequence spans 330 residues: Anthranilate phosphoribosyltransferase (330 aa).

5-phospho-alpha-D-ribose 1-diphosphate contacts are provided by residues G75, G78–D79, T83, N85–T88, K103–S111, and A115. Anthranilate is bound at residue G75. A Mg(2+)-binding site is contributed by S87. Residue N106 participates in anthranilate binding. Residue R161 participates in anthranilate binding. The Mg(2+) site is built by D220 and E221.

The protein belongs to the anthranilate phosphoribosyltransferase family. Homodimer. The cofactor is Mg(2+).

The enzyme catalyses N-(5-phospho-beta-D-ribosyl)anthranilate + diphosphate = 5-phospho-alpha-D-ribose 1-diphosphate + anthranilate. Its pathway is amino-acid biosynthesis; L-tryptophan biosynthesis; L-tryptophan from chorismate: step 2/5. Catalyzes the transfer of the phosphoribosyl group of 5-phosphorylribose-1-pyrophosphate (PRPP) to anthranilate to yield N-(5'-phosphoribosyl)-anthranilate (PRA). This chain is Anthranilate phosphoribosyltransferase, found in Novosphingobium aromaticivorans (strain ATCC 700278 / DSM 12444 / CCUG 56034 / CIP 105152 / NBRC 16084 / F199).